A 438-amino-acid chain; its full sequence is V-type ATP synthase beta chain (438 aa).

It belongs to the ATPase alpha/beta chains family.

Produces ATP from ADP in the presence of a proton gradient across the membrane. The V-type beta chain is a regulatory subunit. The sequence is that of V-type ATP synthase beta chain (atpB) from Chlamydia muridarum (strain MoPn / Nigg).